We begin with the raw amino-acid sequence, 116 residues long: S-adenosylmethionine decarboxylase proenzyme (116 aa).

Ser63 functions as the Schiff-base intermediate with substrate; via pyruvic acid in the catalytic mechanism. Ser63 carries the pyruvic acid (Ser); by autocatalysis modification. His68 (proton acceptor; for processing activity) is an active-site residue. Residue Cys83 is the Proton donor; for catalytic activity of the active site.

This sequence belongs to the prokaryotic AdoMetDC family. Type 1 subfamily. In terms of assembly, heterotetramer of two alpha and two beta chains arranged as a dimer of alpha/beta heterodimers. The cofactor is pyruvate. In terms of processing, is synthesized initially as an inactive proenzyme. Formation of the active enzyme involves a self-maturation process in which the active site pyruvoyl group is generated from an internal serine residue via an autocatalytic post-translational modification. Two non-identical subunits are generated from the proenzyme in this reaction, and the pyruvate is formed at the N-terminus of the alpha chain, which is derived from the carboxyl end of the proenzyme. The post-translation cleavage follows an unusual pathway, termed non-hydrolytic serinolysis, in which the side chain hydroxyl group of the serine supplies its oxygen atom to form the C-terminus of the beta chain, while the remainder of the serine residue undergoes an oxidative deamination to produce ammonia and the pyruvoyl group blocking the N-terminus of the alpha chain.

It catalyses the reaction S-adenosyl-L-methionine + H(+) = S-adenosyl 3-(methylsulfanyl)propylamine + CO2. Its pathway is amine and polyamine biosynthesis; S-adenosylmethioninamine biosynthesis; S-adenosylmethioninamine from S-adenosyl-L-methionine: step 1/1. Its function is as follows. Catalyzes the decarboxylation of S-adenosylmethionine to S-adenosylmethioninamine (dcAdoMet), the propylamine donor required for the synthesis of the polyamines spermine and spermidine from the diamine putrescine. The protein is S-adenosylmethionine decarboxylase proenzyme of Clostridium botulinum (strain ATCC 19397 / Type A).